Consider the following 175-residue polypeptide: Endoribonuclease YbeY (175 aa).

Residues His-129, His-133, and His-139 each coordinate Zn(2+).

This sequence belongs to the endoribonuclease YbeY family. Zn(2+) is required as a cofactor.

The protein resides in the cytoplasm. In terms of biological role, single strand-specific metallo-endoribonuclease involved in late-stage 70S ribosome quality control and in maturation of the 3' terminus of the 16S rRNA. The chain is Endoribonuclease YbeY from Lactobacillus gasseri (strain ATCC 33323 / DSM 20243 / BCRC 14619 / CIP 102991 / JCM 1131 / KCTC 3163 / NCIMB 11718 / NCTC 13722 / AM63).